Reading from the N-terminus, the 512-residue chain is Cytochrome P450 72A11 (512 aa).

The helical transmembrane segment at 2-22 (EISVASVTVSVAVVVVSWWVW) threads the bilayer. Cysteine 460 is a heme binding site.

It belongs to the cytochrome P450 family. Heme serves as cofactor.

The protein localises to the membrane. This Arabidopsis thaliana (Mouse-ear cress) protein is Cytochrome P450 72A11 (CYP72A11).